A 561-amino-acid chain; its full sequence is Trehalose-6-phosphate hydrolase (561 aa).

The active-site Nucleophile is the aspartate 203. Glutamate 254 functions as the Proton donor in the catalytic mechanism.

This sequence belongs to the glycosyl hydrolase 13 family.

It localises to the cytoplasm. It catalyses the reaction alpha,alpha-trehalose 6-phosphate + H2O = D-glucose 6-phosphate + D-glucose. Its activity is regulated as follows. Activity is stimulated by high salt concentrations with different efficiencies depending on the kind of salt. In vitro, inhibited by glucose. Functionally, hydrolyzes trehalose-6-phosphate to glucose and glucose 6-phosphate. Can also very effectively hydrolyze p-nitrophenyl-alpha-D-glucopyranoside, but not lactose, maltose, sucrose or sucrose-6-phosphate. Trehalose is also hydrolyzed, but to a much smaller extent than trehalose-6-phosphate. In Bacillus subtilis (strain 168), this protein is Trehalose-6-phosphate hydrolase.